The chain runs to 63 residues: Sarcotoxin-1A (63 aa).

The first 23 residues, 1–23 (MNFQNIFIFVALILAVFAGQSQA), serve as a signal peptide directing secretion. Arg62 carries the arginine amide modification.

Belongs to the cecropin family.

The protein resides in the secreted. Its function is as follows. Sarcotoxins, which are potent bactericidal proteins, are produced in response to injury. They are cytotoxic to both Gram-positive and Gram-negative bacteria. The polypeptide is Sarcotoxin-1A (Sarcophaga peregrina (Flesh fly)).